Here is a 95-residue protein sequence, read N- to C-terminus: YcgL domain-containing protein Sden_1630 (95 aa).

Positions 1 to 85 constitute a YcgL domain; that stretch reads MICTVYKSRR…PKANLLEEHK (85 aa).

This Shewanella denitrificans (strain OS217 / ATCC BAA-1090 / DSM 15013) protein is YcgL domain-containing protein Sden_1630.